The sequence spans 139 residues: Probable disulfide formation protein C (139 aa).

A helical membrane pass occupies residues 8–27 (EYALLTAWGASFIATLGSLY). A disulfide bridge links Cys37 with Cys40. 2 helical membrane-spanning segments follow: residues 42 to 61 (YQRI…VAKK) and 68 to 85 (YSLP…YHYA). A disulfide bridge connects residues Cys99 and Cys104. A helical membrane pass occupies residues 113 to 135 (GFVTIPFLALIGFITIAVCSFIV).

It belongs to the DsbB family. BdbC subfamily.

The protein localises to the cell membrane. In terms of biological role, required for disulfide bond formation in some proteins. In Bacillus cereus (strain ATCC 14579 / DSM 31 / CCUG 7414 / JCM 2152 / NBRC 15305 / NCIMB 9373 / NCTC 2599 / NRRL B-3711), this protein is Probable disulfide formation protein C.